The following is a 315-amino-acid chain: Lipoyl synthase (315 aa).

[4Fe-4S] cluster-binding residues include C63, C68, C74, C89, C93, C96, and S303. Residues 75-292 (FSHGTATFMI…EKKAYDMGFR (218 aa)) enclose the Radical SAM core domain.

It belongs to the radical SAM superfamily. Lipoyl synthase family. [4Fe-4S] cluster serves as cofactor.

The protein resides in the cytoplasm. It catalyses the reaction [[Fe-S] cluster scaffold protein carrying a second [4Fe-4S](2+) cluster] + N(6)-octanoyl-L-lysyl-[protein] + 2 oxidized [2Fe-2S]-[ferredoxin] + 2 S-adenosyl-L-methionine + 4 H(+) = [[Fe-S] cluster scaffold protein] + N(6)-[(R)-dihydrolipoyl]-L-lysyl-[protein] + 4 Fe(3+) + 2 hydrogen sulfide + 2 5'-deoxyadenosine + 2 L-methionine + 2 reduced [2Fe-2S]-[ferredoxin]. It functions in the pathway protein modification; protein lipoylation via endogenous pathway; protein N(6)-(lipoyl)lysine from octanoyl-[acyl-carrier-protein]: step 2/2. Its function is as follows. Catalyzes the radical-mediated insertion of two sulfur atoms into the C-6 and C-8 positions of the octanoyl moiety bound to the lipoyl domains of lipoate-dependent enzymes, thereby converting the octanoylated domains into lipoylated derivatives. In Laribacter hongkongensis (strain HLHK9), this protein is Lipoyl synthase.